The chain runs to 109 residues: Protein phosphatase 1 regulatory subunit 1C (109 aa).

The tract at residues 25 to 109 (AEQIRKRRPT…TNEREEQRDH (85 aa)) is disordered. Basic and acidic residues predominate over residues 45–54 (NPPEIDDKRV). The span at 55–75 (PNTQGELQNASPKQRKQSVYT) shows a compositional bias: polar residues. A compositionally biased stretch (basic and acidic residues) spans 100-109 (TNEREEQRDH).

This sequence belongs to the protein phosphatase inhibitor 1 family.

Its subcellular location is the cytoplasm. Its function is as follows. May increase cell susceptibility to TNF-induced apoptosis. The sequence is that of Protein phosphatase 1 regulatory subunit 1C (PPP1R1C) from Pongo abelii (Sumatran orangutan).